The primary structure comprises 255 residues: uncharacterized protein (255 aa).

It belongs to the methyltransferase superfamily.

This is an uncharacterized protein from Bacillus subtilis (strain 168).